A 342-amino-acid polypeptide reads, in one-letter code: tRNA N6-adenosine threonylcarbamoyltransferase (342 aa).

Residues histidine 111 and histidine 115 each coordinate Fe cation. Residues 134–138 (LVSGG), aspartate 167, glycine 180, and asparagine 277 each bind substrate. Aspartate 305 contacts Fe cation.

It belongs to the KAE1 / TsaD family. Fe(2+) serves as cofactor.

It is found in the cytoplasm. The catalysed reaction is L-threonylcarbamoyladenylate + adenosine(37) in tRNA = N(6)-L-threonylcarbamoyladenosine(37) in tRNA + AMP + H(+). In terms of biological role, required for the formation of a threonylcarbamoyl group on adenosine at position 37 (t(6)A37) in tRNAs that read codons beginning with adenine. Is involved in the transfer of the threonylcarbamoyl moiety of threonylcarbamoyl-AMP (TC-AMP) to the N6 group of A37, together with TsaE and TsaB. TsaD likely plays a direct catalytic role in this reaction. The chain is tRNA N6-adenosine threonylcarbamoyltransferase from Histophilus somni (strain 2336) (Haemophilus somnus).